Consider the following 672-residue polypeptide: DNA ligase (672 aa).

Residues 35 to 39, 84 to 85, and Glu115 contribute to the NAD(+) site; these read DAQYD and SL. Lys117 serves as the catalytic N6-AMP-lysine intermediate. The NAD(+) site is built by Arg138, Glu178, Lys294, and Lys318. 4 residues coordinate Zn(2+): Cys412, Cys415, Cys430, and Cys435. The BRCT domain occupies 592–672; it reads ATGGPFVGKS…AFLQMLQTNA (81 aa).

It belongs to the NAD-dependent DNA ligase family. LigA subfamily. It depends on Mg(2+) as a cofactor. Mn(2+) is required as a cofactor.

It carries out the reaction NAD(+) + (deoxyribonucleotide)n-3'-hydroxyl + 5'-phospho-(deoxyribonucleotide)m = (deoxyribonucleotide)n+m + AMP + beta-nicotinamide D-nucleotide.. In terms of biological role, DNA ligase that catalyzes the formation of phosphodiester linkages between 5'-phosphoryl and 3'-hydroxyl groups in double-stranded DNA using NAD as a coenzyme and as the energy source for the reaction. It is essential for DNA replication and repair of damaged DNA. This is DNA ligase from Myxococcus xanthus (strain DK1622).